The following is a 486-amino-acid chain: FAD-dependent oxidoreductase domain-containing protein 1 (486 aa).

Residues 66–86 (VVVVGGGVLGLSVAYWLKQLE) form a helical membrane-spanning segment.

Associates with components of the mitochondrial respiratory chain complex I. It depends on FAD as a cofactor.

The protein localises to the mitochondrion inner membrane. Required for the assembly of the mitochondrial membrane respiratory chain NADH dehydrogenase (Complex I). Involved in mid-late stages of complex I assembly. The polypeptide is FAD-dependent oxidoreductase domain-containing protein 1 (FOXRED1) (Macaca fascicularis (Crab-eating macaque)).